Consider the following 513-residue polypeptide: ATP synthase subunit alpha 1 (513 aa).

169 to 176 (GDRQTGKT) is a binding site for ATP.

This sequence belongs to the ATPase alpha/beta chains family. As to quaternary structure, F-type ATPases have 2 components, CF(1) - the catalytic core - and CF(0) - the membrane proton channel. CF(1) has five subunits: alpha(3), beta(3), gamma(1), delta(1), epsilon(1). CF(0) has three main subunits: a(1), b(2) and c(9-12). The alpha and beta chains form an alternating ring which encloses part of the gamma chain. CF(1) is attached to CF(0) by a central stalk formed by the gamma and epsilon chains, while a peripheral stalk is formed by the delta and b chains.

It localises to the cell inner membrane. It carries out the reaction ATP + H2O + 4 H(+)(in) = ADP + phosphate + 5 H(+)(out). Its function is as follows. Produces ATP from ADP in the presence of a proton gradient across the membrane. The alpha chain is a regulatory subunit. This is ATP synthase subunit alpha 1 from Nitrosomonas eutropha (strain DSM 101675 / C91 / Nm57).